The primary structure comprises 29 residues: Cycloviolacin-O21 (29 aa).

A cross-link (cyclopeptide (Gly-Asn)) is located at residues 1–29; the sequence is GLPVCGETCVTGSCYTPGCTCSWPVCTRN. Intrachain disulfides connect Cys5–Cys19, Cys9–Cys21, and Cys14–Cys26.

This is a cyclic peptide. Expressed in leaves, petals, petioles, and runners but not in roots (at protein level).

Functionally, probably participates in a plant defense mechanism. The sequence is that of Cycloviolacin-O21 from Viola odorata (Sweet violet).